A 540-amino-acid polypeptide reads, in one-letter code: Phosphoenolpyruvate carboxykinase (ATP) (540 aa).

Arg-65 provides a ligand contact to substrate. Lys-87 bears the N6-acetyllysine mark. Residues Tyr-207 and Lys-213 each contribute to the substrate site. ATP-binding positions include Lys-213, His-232, and 248–256; that span reads GLSGTGKTT. Mn(2+) is bound by residues Lys-213 and His-232. A Mn(2+)-binding site is contributed by Asp-269. Residues Glu-297, Arg-333, 449–450, and Thr-455 contribute to the ATP site; that span reads RI. Arg-333 lines the substrate pocket. At Lys-523 the chain carries N6-acetyllysine.

The protein belongs to the phosphoenolpyruvate carboxykinase (ATP) family. Monomer. Mn(2+) is required as a cofactor.

Its subcellular location is the cytoplasm. The enzyme catalyses oxaloacetate + ATP = phosphoenolpyruvate + ADP + CO2. The protein operates within carbohydrate biosynthesis; gluconeogenesis. In terms of biological role, involved in the gluconeogenesis. Catalyzes the conversion of oxaloacetate (OAA) to phosphoenolpyruvate (PEP) through direct phosphoryl transfer between the nucleoside triphosphate and OAA. In Escherichia coli O7:K1 (strain IAI39 / ExPEC), this protein is Phosphoenolpyruvate carboxykinase (ATP).